A 151-amino-acid polypeptide reads, in one-letter code: 3-hydroxyacyl-[acyl-carrier-protein] dehydratase FabZ (151 aa).

Residue H54 is part of the active site.

The protein belongs to the thioester dehydratase family. FabZ subfamily.

Its subcellular location is the cytoplasm. It catalyses the reaction a (3R)-hydroxyacyl-[ACP] = a (2E)-enoyl-[ACP] + H2O. In terms of biological role, involved in unsaturated fatty acids biosynthesis. Catalyzes the dehydration of short chain beta-hydroxyacyl-ACPs and long chain saturated and unsaturated beta-hydroxyacyl-ACPs. This Cronobacter sakazakii (strain ATCC BAA-894) (Enterobacter sakazakii) protein is 3-hydroxyacyl-[acyl-carrier-protein] dehydratase FabZ.